A 517-amino-acid polypeptide reads, in one-letter code: L-amino-acid oxidase (517 aa).

A signal peptide spans 1 to 18 (MNVFFMFSLLFLAALESC). Cysteine 29 and cysteine 192 form a disulfide bridge. FAD contacts are provided by residues 62 to 63 (MA), 82 to 83 (EA), arginine 90, and 106 to 109 (GPMR). Arginine 109 contributes to the substrate binding site. N-linked (GlcNAc...) asparagine glycosylation occurs at asparagine 191. FAD is bound at residue valine 280. Residues cysteine 350 and cysteine 431 are joined by a disulfide bond. Asparagine 380 is a glycosylation site (N-linked (GlcNAc...) asparagine). Residue tyrosine 391 coordinates substrate. FAD-binding positions include glutamate 476 and 483 to 488 (GWLDST). 483–484 (GW) contributes to the substrate binding site.

This sequence belongs to the flavin monoamine oxidase family. FIG1 subfamily. In terms of assembly, homodimer; non-covalently linked. FAD is required as a cofactor. Post-translationally, N-glycosylated. In terms of tissue distribution, expressed by the venom gland.

The protein resides in the secreted. It catalyses the reaction an L-alpha-amino acid + O2 + H2O = a 2-oxocarboxylate + H2O2 + NH4(+). Its function is as follows. Catalyzes an oxidative deamination of predominantly hydrophobic and aromatic L-amino acids, thus producing hydrogen peroxide that may contribute to the diverse toxic effects of this enzyme. Exhibits diverse biological activities, such as hemorrhage, hemolysis, edema, apoptosis of vascular endothelial cells or tumor cell lines, antibacterial and antiparasitic activities, as well as regulation of platelet aggregation. Effects of snake L-amino oxidases on platelets are controversial, since they either induce aggregation or inhibit agonist-induced aggregation. These different effects are probably due to different experimental conditions. The protein is L-amino-acid oxidase of Notechis scutatus scutatus (Mainland tiger snake).